A 365-amino-acid polypeptide reads, in one-letter code: Galactoside alpha-(1,2)-fucosyltransferase 1 (365 aa).

Residues 1-8 are Cytoplasmic-facing; sequence MWPLSHRH. Residues 9-25 form a helical; Signal-anchor for type II membrane protein membrane-spanning segment; that stretch reads LCLAFLLVCVLSAISFF. Residues 26–365 lie on the Lumenal side of the membrane; it reads LHLYQDSIRH…LSPLWTLAEP (340 aa). N-linked (GlcNAc...) asparagine glycosylation is found at N65, N301, and N327.

This sequence belongs to the glycosyltransferase 11 family.

It localises to the golgi apparatus. The protein resides in the golgi stack membrane. The enzyme catalyses a beta-D-galactosyl-(1-&gt;4)-N-acetyl-beta-D-glucosaminyl derivative + GDP-beta-L-fucose = an alpha-L-Fuc-(1-&gt;2)-beta-D-Gal-(1-&gt;4)-beta-D-GlcNAc derivative + GDP + H(+). It catalyses the reaction a ganglioside GA1 + GDP-beta-L-fucose = a ganglioside Fuc-GA1 + GDP + H(+). It carries out the reaction a beta-D-Gal-(1-&gt;3)-beta-D-GlcNAc-(1-&gt;3)-beta-D-Gal-(1-&gt;4)-beta-D-Glc-(1&lt;-&gt;1')-Cer(d18:1(4E)) + GDP-beta-L-fucose = alpha-L-fucosyl-(1-&gt;2)- beta-D-galactosyl-(1-&gt;3)-N-acetyl-beta-D-glucosaminyl-(1-&gt;3)-beta-D-galactosyl-(1-&gt;4)-beta-D-glucosyl-(1&lt;-&gt;1')-N-acylsphing-4-enine + GDP + H(+). The catalysed reaction is a neolactoside nLc4Cer(d18:1(4E)) + GDP-beta-L-fucose = a neolactoside IV(2)-alpha-Fuc-nLc4Cer(d18:1(4E)) + GDP + H(+). The enzyme catalyses a ganglioside GM1 + GDP-beta-L-fucose = a ganglioside Fuc-GM1 + GDP + H(+). It catalyses the reaction beta-D-galactosyl-(1-&gt;3)-N-acetyl-D-galactosamine + GDP-beta-L-fucose = alpha-L-fucosyl-(1-&gt;2)-beta-D-galactosyl-(1-&gt;3)-N-acetyl-D-galactosamine + GDP + H(+). The protein operates within protein modification; protein glycosylation. Functionally, catalyzes the transfer of L-fucose, from a guanosine diphosphate-beta-L-fucose, to the terminal galactose residue of glycoconjugates through an alpha(1,2) linkage leading to H antigen synthesis that is an intermediate substrate in the synthesis of ABO blood group antigens. H antigen is essential for maturation of the glomerular layer of the main olfactory bulb, in cell migration and early cell-cell contacts during tumor associated angiogenesis. Preferentially fucosylates soluble lactose and to a lesser extent fucosylates glycolipids gangliosides GA1 and GM1a. This Leontopithecus chrysomelas (Golden-headed lion tamarin) protein is Galactoside alpha-(1,2)-fucosyltransferase 1.